The chain runs to 185 residues: Homeobox expressed in ES cells 1 (185 aa).

Residues 32–69 are disordered; the sequence is KKDCTTSVRPHRPWTDTCGDSEKGGNPPLHAPDLPSET. A DNA-binding region (homeobox) is located at residues 108 to 167; the sequence is GRRPRTAFTQNQVEVLENVFRVNCYPGIDIREDLAQKLNLEEDRIQIWFQNRRAKMKRSR.

This sequence belongs to the ANF homeobox family. Can form heterodimers with PROP1 in binding to DNA Interacts with TLE1. As to expression, high levels found in the embryonic liver, lower level expression seen in the viscera, amnion and yolk sac.

Its subcellular location is the nucleus. Its function is as follows. Required for the normal development of the forebrain, eyes and other anterior structures such as the olfactory placodes and pituitary gland. Possible transcriptional repressor. Binds to the palindromic PIII sequence, 5'-AGCTTGAGTCTAATTGAATTAACTGTAC-3'. HESX1 and PROP1 bind as heterodimers on this palindromic site, and, in vitro, HESX1 can antagonize PROP1 activation. This chain is Homeobox expressed in ES cells 1 (Hesx1), found in Mus musculus (Mouse).